Here is a 481-residue protein sequence, read N- to C-terminus: UDP-glucose 6-dehydrogenase 1 (481 aa).

Residues 8–13 (GAGYVG), Asp-33, Arg-38, 86–90 (VNTPT), 127–128 (ST), and Glu-162 each bind NAD(+). Substrate contacts are provided by residues 158–162 (EFLAE), 217–224 (KLAANAFL), and 257–270 (RIGAKFLNASVGFG). Catalysis depends on Cys-273, which acts as the Nucleophile. 273–276 (CFQK) contacts NAD(+). 335-336 (FK) is a substrate binding site. Arg-343 lines the NAD(+) pocket. A Phosphoserine modification is found at Ser-394. Arg-448 contacts substrate.

The protein belongs to the UDP-glucose/GDP-mannose dehydrogenase family.

It carries out the reaction UDP-alpha-D-glucose + 2 NAD(+) + H2O = UDP-alpha-D-glucuronate + 2 NADH + 3 H(+). It participates in nucleotide-sugar biosynthesis; UDP-alpha-D-glucuronate biosynthesis; UDP-alpha-D-glucuronate from UDP-alpha-D-glucose: step 1/1. Involved in the biosynthesis of UDP-glucuronic acid (UDP-GlcA), providing nucleotide sugars for cell-wall polymers. This chain is UDP-glucose 6-dehydrogenase 1 (UGD1), found in Oryza sativa subsp. japonica (Rice).